Consider the following 69-residue polypeptide: ATP synthase protein 8 (69 aa).

Residues 8-24 (TWTLTISLMIISLFCIY) traverse the membrane as a helical segment. Lys55 is modified (N6-acetyllysine; alternate). Residue Lys55 is modified to N6-succinyllysine; alternate. Lys58 is subject to N6-acetyllysine.

The protein belongs to the ATPase protein 8 family. As to quaternary structure, F-type ATPases have 2 components, CF(1) - the catalytic core - and CF(0) - the membrane proton channel. Component of an ATP synthase complex composed of ATP5PB, ATP5MC1, ATP5F1E, ATP5PD, ATP5ME, ATP5PF, ATP5MF, MT-ATP6, MT-ATP8, ATP5F1A, ATP5F1B, ATP5F1D, ATP5F1C, ATP5PO, ATP5MG, ATP5MK and ATP5MJ. Interacts with PRICKLE3.

It is found in the mitochondrion membrane. Its function is as follows. Mitochondrial membrane ATP synthase (F(1)F(0) ATP synthase or Complex V) produces ATP from ADP in the presence of a proton gradient across the membrane which is generated by electron transport complexes of the respiratory chain. F-type ATPases consist of two structural domains, F(1) - containing the extramembraneous catalytic core and F(0) - containing the membrane proton channel, linked together by a central stalk and a peripheral stalk. During catalysis, ATP synthesis in the catalytic domain of F(1) is coupled via a rotary mechanism of the central stalk subunits to proton translocation. Part of the complex F(0) domain. Minor subunit located with subunit a in the membrane. This Didelphis virginiana (North American opossum) protein is ATP synthase protein 8 (MT-ATP8).